The sequence spans 200 residues: uncharacterized protein (200 aa).

This is an uncharacterized protein from Ostreid herpesvirus 1 (isolate France) (OsHV-1).